We begin with the raw amino-acid sequence, 93 residues long: MAAVAAEQKKVVVHFRSTGNAPQLKQSKFKIGGNEKFLKIIDFLRRQIHQDTVFLYVNSAFSPNPDELIIDLYNNFGIDGQLVVNYASSMAWG.

A Glycyl lysine isopeptide (Gly-Lys) (interchain with K-138 in ATG5) cross-link involves residue glycine 93.

This sequence belongs to the ATG12 family.

Its subcellular location is the cytoplasm. Its function is as follows. Ubiquitin-like protein involved in cytoplasm to vacuole transport (Cvt) and autophagy vesicles formation. Conjugation with ATG5 through a ubiquitin-like conjugating system is essential for its function. ATG12/ATG5 conjugate has an essential role in plant nutrient recycling. This is Ubiquitin-like protein ATG12 (ATG12) from Oryza sativa subsp. indica (Rice).